A 328-amino-acid chain; its full sequence is Malate dehydrogenase (328 aa).

Residue 11-17 (GAAGQIG) coordinates NAD(+). The substrate site is built by R94 and R100. Residues N107, Q114, and 131-133 (VGN) contribute to the NAD(+) site. Residues N133 and R164 each coordinate substrate. H189 functions as the Proton acceptor in the catalytic mechanism.

This sequence belongs to the LDH/MDH superfamily. MDH type 2 family.

It catalyses the reaction (S)-malate + NAD(+) = oxaloacetate + NADH + H(+). In terms of biological role, catalyzes the reversible oxidation of malate to oxaloacetate. In Xylella fastidiosa (strain M23), this protein is Malate dehydrogenase.